Consider the following 322-residue polypeptide: MTSSNQGNDPSENTLKNAENETPNACEDEKEHPLPDTNISQVETNLSGMEPSSISSQEDMDFQTVQNSQPEAEMTQNDPPDEELIEDSLPLQIPIPKKLTIPRLILCRIIYLSIPQPQPQLHEKKTLSDKMMFHLGEVEMTENDCFHTPILDKMIHPCFLRWRVPFFTTNEISRMIIHLLCSRNFSQAECHQHNASVKQKYVAILDHQNIMNLQRNIVFGRPLRVYYYHPLFERLTQRKASKLYQHKNGNHLFVRPRFYMPQLQTQNTVQKNVFKHSWRAHHKLRLVIITDNNNWKYLCPICGCGFNNFYDFKHHSCSFSGN.

Composition is skewed to polar residues over residues 1–23 (MTSS…NETP) and 37–78 (TNIS…TQND). Residues 1–83 (MTSSNQGNDP…MTQNDPPDEE (83 aa)) are disordered.

The polypeptide is CPX chromosomal region candidate gene 1 protein homolog (Cpxcr1) (Mus musculus (Mouse)).